Consider the following 507-residue polypeptide: Maturase K (507 aa).

The protein belongs to the intron maturase 2 family. MatK subfamily.

The protein localises to the plastid. It is found in the chloroplast. Functionally, usually encoded in the trnK tRNA gene intron. Probably assists in splicing its own and other chloroplast group II introns. This chain is Maturase K, found in Cananga odorata (Ylang-ylang tree).